The sequence spans 194 residues: UPF0215 protein PF2042 (194 aa).

It belongs to the UPF0215 family.

The sequence is that of UPF0215 protein PF2042 from Pyrococcus furiosus (strain ATCC 43587 / DSM 3638 / JCM 8422 / Vc1).